Here is a 106-residue protein sequence, read N- to C-terminus: MDLETRVSGHEKPQRRNPEDPDCQYAKTRSSPCKPLGRFEEVASRTSAGSWTHQNGFGDTSLFEIYSNQAITGPYQQMGFRGEKRGYGNNKEVQERSCCHVENNQC.

The segment covering 1–19 has biased composition (basic and acidic residues); it reads MDLETRVSGHEKPQRRNPE. The interval 1 to 31 is disordered; the sequence is MDLETRVSGHEKPQRRNPEDPDCQYAKTRSS.

The protein resides in the host cytoplasm. It is found in the host cytoskeleton. Functionally, plays a role in viral replication. The sequence is that of uORF protein from Zika virus (ZIKV).